The chain runs to 852 residues: Homeobox-leucine zipper protein ATHB-14 (852 aa).

A disordered region spans residues 1 to 25; the sequence is MMMVHSMSRDMMNRESPDKGLDSGK. The segment covering 7–22 has biased composition (basic and acidic residues); it reads MSRDMMNRESPDKGLD. Positions 22–85 form a DNA-binding region, homeobox; it reads DSGKYVRYTP…NRRCREKQRK (64 aa). A coiled-coil region spans residues 80 to 122; the sequence is REKQRKEAARLQTVNRKLNAMNKLLMEENDRLQKQVSNLVYEN. The tract at residues 80–130 is ZIP domain; that stretch reads REKQRKEAARLQTVNRKLNAMNKLLMEENDRLQKQVSNLVYENGHMKHQLH. The segment covering 130 to 148 has biased composition (polar residues); that stretch reads HTASGTTTDNSCESVVVSG. Residues 130-166 are disordered; it reads HTASGTTTDNSCESVVVSGQQHQQQNPNPQHQQRDAN. The span at 149–160 shows a compositional bias: low complexity; sequence QQHQQQNPNPQH. Residues 164 to 392 form the START domain; it reads DANNPAGLLS…IAQETSGEVQ (229 aa).

The protein belongs to the HD-ZIP homeobox family. Class III subfamily. In terms of assembly, homodimer. Heterodimer with ZPR3. Interacts with ESR1 and ESR2. Interacts with ZPR3. In terms of tissue distribution, expressed in the center of the meristem and on the adaxial side of the leaves.

It localises to the nucleus. Its activity is regulated as follows. Inhibited by ZPR3. Functionally, probable transcription factor involved in the determination of adaxial-abaxial polarity in ovule primordium. Specifies adaxial leaf fates. In Arabidopsis thaliana (Mouse-ear cress), this protein is Homeobox-leucine zipper protein ATHB-14 (ATHB-14).